The following is a 585-amino-acid chain: Protein NRT1/ PTR FAMILY 8.3 (585 aa).

Residue glycine 2 is modified to N-acetylglycine. The helical transmembrane segment at 91–111 (WQGTCYLTPLIGAVLADAYWG) threads the bilayer. At threonine 115 the chain carries Phosphothreonine. 10 helical membrane passes run 116-136 (IACF…SASV), 154-174 (PAQY…TGGI), 200-220 (FFNW…SLLV), 228-248 (WGLG…SFFF), 351-371 (FPIW…STMF), 387-407 (LPPA…VPLY), 431-451 (MGIG…VEII), 472-492 (VLWQ…YFIG), 511-531 (ALAL…LTLV), and 556-576 (FFWL…FSAA).

It belongs to the major facilitator superfamily. Proton-dependent oligopeptide transporter (POT/PTR) (TC 2.A.17) family. As to expression, highly expressed in young leaves, roots and germinating seeds, intermediately in stems, flowers and mature leaves and at low level in siliques.

It localises to the vacuole membrane. With respect to regulation, inhibited by leucyl-ethionine. Peptide transporter. Mediates the transport of di- and tripeptides. High affinity, low capacity transporter. Can also transport histidine. This chain is Protein NRT1/ PTR FAMILY 8.3 (NPF8.3), found in Arabidopsis thaliana (Mouse-ear cress).